A 196-amino-acid polypeptide reads, in one-letter code: Protein TEX261 (196 aa).

A run of 5 helical transmembrane segments spans residues 3–23, 42–62, 70–90, 97–117, and 125–145; these read FMYV…TLAV, SRII…LYVF, IGVG…FPFI, FILS…FFAE, and VLAY…VSLS.

It belongs to the SVP26 family. Detected in testis.

Its subcellular location is the membrane. The chain is Protein TEX261 (Tex261) from Mus musculus (Mouse).